Reading from the N-terminus, the 879-residue chain is Phosphoenolpyruvate carboxylase (879 aa).

Catalysis depends on residues H138 and K545.

It belongs to the PEPCase type 1 family. Mg(2+) is required as a cofactor.

The enzyme catalyses oxaloacetate + phosphate = phosphoenolpyruvate + hydrogencarbonate. In terms of biological role, forms oxaloacetate, a four-carbon dicarboxylic acid source for the tricarboxylic acid cycle. The protein is Phosphoenolpyruvate carboxylase (ppc) of Haemophilus influenzae (strain ATCC 51907 / DSM 11121 / KW20 / Rd).